Reading from the N-terminus, the 477-residue chain is Histidine--tRNA ligase (477 aa).

Belongs to the class-II aminoacyl-tRNA synthetase family. In terms of assembly, homodimer.

Its subcellular location is the cytoplasm. The catalysed reaction is tRNA(His) + L-histidine + ATP = L-histidyl-tRNA(His) + AMP + diphosphate + H(+). The chain is Histidine--tRNA ligase (hisS) from Xanthomonas campestris pv. campestris (strain ATCC 33913 / DSM 3586 / NCPPB 528 / LMG 568 / P 25).